Consider the following 158-residue polypeptide: Large ribosomal subunit protein uL15 (158 aa).

The span at 1 to 13 (MKLNEIKDNEGST) shows a compositional bias: basic and acidic residues. A disordered region spans residues 1–44 (MKLNEIKDNEGSTHSRKRLGRGIGSGSGKTAGRGVKGQKSRSGV). Residues 21 to 35 (RGIGSGSGKTAGRGV) are compositionally biased toward gly residues.

It belongs to the universal ribosomal protein uL15 family. Part of the 50S ribosomal subunit.

In terms of biological role, binds to the 23S rRNA. The sequence is that of Large ribosomal subunit protein uL15 from Rhizobium etli (strain ATCC 51251 / DSM 11541 / JCM 21823 / NBRC 15573 / CFN 42).